Consider the following 323-residue polypeptide: Melanocortin receptor 3 (323 aa).

Residues 1–37 lie on the Extracellular side of the membrane; that stretch reads MNSSCCLSSVSPMLPNLSEHPAAPPASNRSGSGFCEQ. N2, N16, and N28 each carry an N-linked (GlcNAc...) asparagine glycan. The helical transmembrane segment at 38-63 threads the bilayer; that stretch reads VFIKPEVFLALGIVSLMENILVILAV. Residues 64–75 lie on the Cytoplasmic side of the membrane; the sequence is VRNGNLHSPMYF. A helical membrane pass occupies residues 76-100; it reads FLCSLAAADMLVSLSNSLETIMIAV. The Extracellular segment spans residues 101–118; that stretch reads INSDSLTLEDQFIQHMDN. Residues 119-140 traverse the membrane as a helical segment; the sequence is IFDSMICISLVASICNLLAIAI. Residues 141 to 160 are Cytoplasmic-facing; sequence DRYVTIFYALRYHSIMTVRK. Residues 161 to 181 form a helical membrane-spanning segment; the sequence is ALTLIGVIWVCCGICGVMFII. Topologically, residues 182–186 are extracellular; it reads YSESK. A helical transmembrane segment spans residues 187–210; the sequence is MVIVCLITMFFAMVLLMGTLYIHM. Topologically, residues 211-245 are cytoplasmic; the sequence is FLFARLHVQRIAVLPPAGVVAPQQHSCMKGAVTIT. The chain crosses the membrane as a helical span at residues 246-268; the sequence is ILLGVFIFCWAPFFLHLVLIITC. Residues 269–277 are Extracellular-facing; sequence PTNPYCICY. A helical transmembrane segment spans residues 278 to 301; that stretch reads TAHFNTYLVLIMCNSVIDPLIYAF. At 302-323 the chain is on the cytoplasmic side; sequence RSLELRNTFKEILCGCNSMNLG. C315 is lipidated: S-palmitoyl cysteine.

It belongs to the G-protein coupled receptor 1 family. In terms of tissue distribution, brain.

The protein resides in the cell membrane. Functionally, receptor for MSH (alpha, beta and gamma) and ACTH. This receptor is mediated by G proteins which activate adenylate cyclase. Required for expression of anticipatory patterns of activity and wakefulness during periods of limited nutrient availability and for the normal regulation of circadian clock activity in the brain. In Mus musculus (Mouse), this protein is Melanocortin receptor 3 (Mc3r).